A 196-amino-acid chain; its full sequence is GTP cyclohydrolase 1 (196 aa).

3 residues coordinate Zn(2+): cysteine 86, histidine 89, and cysteine 157.

The protein belongs to the GTP cyclohydrolase I family. In terms of assembly, toroid-shaped homodecamer, composed of two pentamers of five dimers.

The enzyme catalyses GTP + H2O = 7,8-dihydroneopterin 3'-triphosphate + formate + H(+). Its pathway is cofactor biosynthesis; 7,8-dihydroneopterin triphosphate biosynthesis; 7,8-dihydroneopterin triphosphate from GTP: step 1/1. This Parabacteroides distasonis (strain ATCC 8503 / DSM 20701 / CIP 104284 / JCM 5825 / NCTC 11152) protein is GTP cyclohydrolase 1.